Here is a 165-residue protein sequence, read N- to C-terminus: Crossover junction endodeoxyribonuclease RuvC (165 aa).

Active-site residues include Asp7, Glu68, and His142. 3 residues coordinate Mg(2+): Asp7, Glu68, and His142.

It belongs to the RuvC family. Homodimer which binds Holliday junction (HJ) DNA. The HJ becomes 2-fold symmetrical on binding to RuvC with unstacked arms; it has a different conformation from HJ DNA in complex with RuvA. In the full resolvosome a probable DNA-RuvA(4)-RuvB(12)-RuvC(2) complex forms which resolves the HJ. The cofactor is Mg(2+).

The protein localises to the cytoplasm. It carries out the reaction Endonucleolytic cleavage at a junction such as a reciprocal single-stranded crossover between two homologous DNA duplexes (Holliday junction).. The RuvA-RuvB-RuvC complex processes Holliday junction (HJ) DNA during genetic recombination and DNA repair. Endonuclease that resolves HJ intermediates. Cleaves cruciform DNA by making single-stranded nicks across the HJ at symmetrical positions within the homologous arms, yielding a 5'-phosphate and a 3'-hydroxyl group; requires a central core of homology in the junction. The consensus cleavage sequence is 5'-(A/T)TT(C/G)-3'. Cleavage occurs on the 3'-side of the TT dinucleotide at the point of strand exchange. HJ branch migration catalyzed by RuvA-RuvB allows RuvC to scan DNA until it finds its consensus sequence, where it cleaves and resolves the cruciform DNA. This chain is Crossover junction endodeoxyribonuclease RuvC, found in Anaplasma marginale (strain Florida).